The following is a 214-amino-acid chain: Coiled-coil domain-containing protein 169 (214 aa).

The stretch at 30 to 144 (EMLQMSTFEL…IEQEAKAYYK (115 aa)) forms a coiled coil. The interval 161-214 (VTQEAAKKQQSDPAHATREKPAFKAKYNGLAKRRTMTKRRGGMTKGSHPSNMKH) is disordered. The span at 165–182 (AAKKQQSDPAHATREKPA) shows a compositional bias: basic and acidic residues. Over residues 191–202 (AKRRTMTKRRGG) the composition is skewed to basic residues.

This sequence belongs to the CCDC169 family.

In Xenopus laevis (African clawed frog), this protein is Coiled-coil domain-containing protein 169 (ccdc169).